Reading from the N-terminus, the 85-residue chain is Putative membrane protein insertion efficiency factor (85 aa).

The protein belongs to the UPF0161 family.

The protein resides in the cell membrane. Could be involved in insertion of integral membrane proteins into the membrane. In terms of biological role, lyses fish blood cells. The chain is Putative membrane protein insertion efficiency factor (hlyA) from Aeromonas hydrophila.